A 134-amino-acid polypeptide reads, in one-letter code: Large ribosomal subunit protein eL32 (134 aa).

This sequence belongs to the eukaryotic ribosomal protein eL32 family.

The sequence is that of Large ribosomal subunit protein eL32 (RpL32) from Drosophila acanthoptera (Fruit fly).